The following is a 100-amino-acid chain: MELTPREKDKLLIFTAALLAERRKARGLKLNYPEAVALITAAIMEGARDGRTVAELMHEGTTVLGREDVMDGVAEMIPEIQVEATFPDGTKLVTVHHPIV.

It belongs to the urease gamma subunit family. In terms of assembly, heterotrimer of UreA (gamma), UreB (beta) and UreC (alpha) subunits. Three heterotrimers associate to form the active enzyme.

It localises to the cytoplasm. The catalysed reaction is urea + 2 H2O + H(+) = hydrogencarbonate + 2 NH4(+). It functions in the pathway nitrogen metabolism; urea degradation; CO(2) and NH(3) from urea (urease route): step 1/1. The chain is Urease subunit gamma from Cupriavidus necator (strain ATCC 17699 / DSM 428 / KCTC 22496 / NCIMB 10442 / H16 / Stanier 337) (Ralstonia eutropha).